A 91-amino-acid polypeptide reads, in one-letter code: Small ribosomal subunit protein uS15 (91 aa).

The protein belongs to the universal ribosomal protein uS15 family. Part of the 30S ribosomal subunit. Forms a bridge to the 50S subunit in the 70S ribosome, contacting the 23S rRNA.

In terms of biological role, one of the primary rRNA binding proteins, it binds directly to 16S rRNA where it helps nucleate assembly of the platform of the 30S subunit by binding and bridging several RNA helices of the 16S rRNA. Its function is as follows. Forms an intersubunit bridge (bridge B4) with the 23S rRNA of the 50S subunit in the ribosome. In Nautilia profundicola (strain ATCC BAA-1463 / DSM 18972 / AmH), this protein is Small ribosomal subunit protein uS15.